Here is a 3674-residue protein sequence, read N- to C-terminus: MSEVSSDEREDVQKKTFTKWINAQFSKFGKQHIENLFNDLQDGRRLLDLLEGLTGQKLPKEKGSTRVHALNNVNKALQVLQKNNVDLVNIGSTDIVDGNHKLTLGLIWNIILHWQVKNVMKNIMAGLQQTNSEKILLSWVRQSTRNYPQVNVINFTTSWSDGLALNALIHSHRPDLFDWNSVVCQQSATQRLEHAFNIAKYQLGIEKLLDPEDVATTYPDKKSILMYVTSLFQVLPQQVSIEAIQEVEMLPRPSKVTREEHFQLHHQMHYSQQITVCLAQGYERTPSPKPRFKSYAYTQAAYVTTSDPTRSPFPSQRLESPEDKSFGSSLLETEVNLDSYQTALEEVLSWLLSAEDTLQAQGEISNDVEEVKEQFHTHEGYMMDLTSHQGRIGSVLQLGSQLIGKGKLSEDEETEVQEQMNLLNSRWECLRVASVEKQSNLHKVLMDLQNQQLKELNDWLTKTEEKTRKMEKEPLGPDLEDLKHQIQQHKVLQEDLEQEQVRVNSLTHMVVVVDESSGDHATAALEEQLKVLGDRWANICRWTEDRWVLLQDILLKWQRFTEEQCLFSTWLSEKEDALNKIHTTGFKDQGEMLSSLQKLAVLKTDLEKKKQTMDKLSSLNQDLLSTLKNTLVAQKMEAWLDNFAQRWDNLVQKLEKSSTQISQAVTTTQPSLTQTTVMETVTMVTTREQILVKHAQEELPPPPPQKKRQIIVDSEIRKRLDVDITELHSWITRSEAVLQSPEFAIYRKEGNFSDLKEKVNAIEREKAEKFRKLQDASRSAQALVEQMVNEGVNADSIKQAAEQLNSRWIEFCQLLSERLNWLEYQNRIITFYNQLQQLEQITTAAENWLKTQPITTSEPTAVKSQLKICKDEVNRLSALQPQIERLKIESIALKEKGQGPMFLDADSVAFTNHFNQVFADMQAKEKELQIIFDTLPPMRYQETMSTILTWIQHSEAKLSIPQATVTEYEIMEQRLGELQALQSSLQEQQNGLNYLSTTVKEMSKKAPSNISRKYQSEFEEIEGRWKKLSAQLMEHCQKLEEQIAKLRKLQNHIKTLKNWMAEVDIFLKEEWPALGDSEILRKQLKQCRLLVSDIQTIQPSLNSVNEGGQKIKKEAEPEFASRLETELRELNTQWDYICRQVYARKEALKGGLDKTISLQKDLSEMHEWMTQAEEEYLERDFEYKTPDELQTAVEEMKRAKEEAQQKEAKVKLLTESVNSVIAQAPPAAQEALKKELDTLTTNYQWLCTRLNGKCKTLEEVWACWHELLSYLEKANKWLSEVEFKLKTTENIPGGAEEISEVLESLENLMQHSEDNPNQIRILAQTLTDGGVMDELINEELETFNSRWRELHEEAVRRQKLLEQSIQSAQEIEKSLHLIQDSLSSIDHQLAVYIADKVDAAQMPQEAQKIQSDLTSHEISLEEMKKHYQGKEAAPRVLSQIELAQKKLQDVSMKFRLFQKPANFEQRLQESKMILDEVKMHLPALEIKSVEQEVVQSQLNHCVNLYKSLSEVKSEVEMVIKTGRQIVQKKQTENPKELDERVTALKLHYNELGAKVTERKQQLEKCLKLSRKMRKEMNVLTEWLAATDTELTKRSAVEGMPSNLDSEVVWGKATQKEIEKQKFHLKSISEIGEALKMVLGKKETLVEDKLSLLNSNWIAVTSRAEEWLNLLLEYQKHMENFDQNVDHITKWIIQADTLLDESEKKKPQQKEDVLKRLKAEMNDMRPKVDSTRDQAANLMANRGDHCRKVIEPKISELNHRFAAISHRIKTGKASIPLKELEQFNSDIQKLLEPLEAEIQQGVNLKEEDFNKDMSEDNEGTVKELLQRGDNLQQRITDERKREEIKIKQQLLQTKHNALKDLRSQRRKKALEISHQWYQYKRQADDLLKCLDDIEKKLASLPEPQDEKKIKEIDRELQKKKEELDAVRRQAEGLSEDGAAMAVEPTQIQLSKRWREIESKFAHFRRLNFAQIHTVHEESVMVMTEDMPLEISYVPSAYLTEITHVSQALSEVEQLLNAPDLCAKDFEDLFKQEESLKNIKDSLQQISGRVDIIHNKKTAGLQSATPVERTRLQEALSQLDFQWERVNKMYKDRQGKFDRSVEKWRRFHYDMKIFNQWLTEAEHFLKKTQIPENWEHAKYKWYLKELQDGIGQRQTIVRVLNATGEEVIQQSSKTDASILQEKLGSLNLRWQEVCKQLAERKKRLEEQKNILSEFQRDLNEFVLWLEEADNITSVALEPGNEQQLKEKLEEIKLLAEELPLRQGTLKQLNETGGTVLVSAPISPEEQDKIENKLKQTNLQWIKVSRILPEKQGEIEAHIKDLGQFEEQLNHLLVWLSPIKNQLEIYNQPNQTGPFDIKETEVAVQAKQLDVEGILSKGQHLYKEKPATQPVKRKLEDLSSEWKAVTHLLQELRAKWPGPTPGLTTIEAPTSQTVTLVTQPTVTKETAISKPEMPSSLLLEVPALADFNRAWTELTDWLSLLDRVIKSQRVMVGDLEDINEMIIKQKATLQDLEQRRPQLEELITAAQNLKNKTSNQEARTIITDRIERIQSQWDEVQEHLQNRRQQLNEMLKDSTQWLEAKEEAEQVLGQARAKLESWKEGPYTMDAIQRKITETKQLAKDLRQWQINVDVANDLALKLLRDYSADDTRKVHMITENINASWANIHKRLSERETVLEETHRLLQQFPLDLEKFLAWLTEAETTANVLQDATHKERLLEDSKGVRELMKQWQDLQGEIEAHTDIYHNLDENGQKILRSLEGSDDAILLQRRLDNMNFKWSELRKKSLNIRSHLEASSDQWKRLHLSLQELLVWLQLKDDELSRQAPIGGDCPAVQKQNDVHRAFKRELKTKEPVIMSTLETVRIFLTEQPLEGLEKLYQEPRELPPEERAQNVTRLLRKQAEEVNTEWEKLNLHSADWQRKIDEALERLQELQEATDELDLKLRQAEVIKGSWQPVGDLLIDSLQDHLEKVKALRGEKAPLKENVSHVNDLARQLTTLGIQLSPYNLSTLEDLNTRWKLLQVAVEDRIRQLHEAHRDFGPASQHFLSTSVQGPWERAISPNKVPYYINHETQTTCWDHPKMTELYQSLADLNNVRFSAYRTAMKLRRLQKALCLDLLSLSAACDALDQHNLKQNDQPMDILQIINCLTTVYDRLEQEHNNLVNVPLCVDMCLNWLLNVYDTGRTGRIRVLSFKTGIVSLCKAHLEDKYRYLFKQVASSTGFCDQRRLGLLLHDSIQIPRQLGEVASFGGSNIEPSVRSCFQFANNKPEIEAALFLDWMRLEPQSMVWLPVLHRVAAAETAKHQAKCNICKECPIIGFRYRSLKHFNYDICQSCFFSGRVAKGHKMHYPMVEYCTPTTSGEDVRDFAKVLKNKFRTKRYFAKHPRMGYLPVQTVLEGDNMETPVTLINFWPVDSAPASSPQLSHDDTHSRIEHYASRLAEMENSNGSYLNDSISPNESIDDEHLLIQHYCQSLNQDSPLSQPRSPAQILISLESEERGELERILADLEEENRNLQAEYDRLKQQHEHKGLSPLPSPPEMMPTSPQSPRDAELIAEAKLLRQHKGRLEARMQTLEDHNKQLESQLHRLRQLLEQPQAEAKVNGTTVSSPSTSLQRSDSSQPMLLRVVGSQTSESMGEEDLLSPPQDTSTGLEEVMEQLNNSFPSSRGRNTPGKPVREDTM.

An actin-binding region spans residues 1–236 (MSEVSSDERE…YVTSLFQVLP (236 aa)). 2 Calponin-homology (CH) domains span residues 11 to 115 (DVQK…LHWQ) and 130 to 236 (TNSE…QVLP). Positions 59–68 (PKEKGSTRVH) are ANK2- and ANK-3 binding. The segment covering 306–318 (SDPTRSPFPSQRL) has biased composition (polar residues). The disordered stretch occupies residues 306-325 (SDPTRSPFPSQRLESPEDKS). 24 Spectrin repeats span residues 335-443 (VNLD…NLHK), 444-552 (VLMD…LLQD), 555-663 (LKWQ…QISQ), 715-824 (EIRK…WLEY), 826-930 (NRII…ELQI), 939-1041 (RYQE…KLEE), 1044-1150 (AKLR…ALKG), 1153-1259 (DKTI…TLEE), 1262-1363 (ACWH…LLEQ), 1364-1459 (SIQS…LFQK), 1464-1564 (EQRL…QLEK), 1567-1672 (KLSR…LLLE), 1675-1774 (KHME…KASI), 1775-1870 (PLKE…KALE), 1873-1975 (HQWY…TVHE), 1988-2097 (EISY…KFDR), 2100-2204 (EKWR…RLEE), 2207-2314 (NILS…EIEA), 2315-2412 (HIKD…LRAK), 2464-2566 (FNRA…QLNE), 2569-2675 (KDST…VLEE), 2678-2791 (RLLQ…HLEA), 2797-2919 (KRLH…RKID), and 2924-3029 (RLQE…QLHE). The interaction with SYNM stretch occupies residues 1411 to 1909 (SDLTSHEISL…PEPQDEKKIK (499 aa)). Residues 3044–3077 (TSVQGPWERAISPNKVPYYINHETQTTCWDHPKM) enclose the WW domain. The tract at residues 3047-3397 (QGPWERAISP…TVLEGDNMET (351 aa)) is interaction with SYNM. A ZZ-type; degenerate zinc finger spans residues 3297–3353 (KHQAKCNICKECPIIGFRYRSLKHFNYDICQSCFFSGRVAKGHKMHYPMVEYCTPTT). Cys-3302, Cys-3305, Cys-3326, and Cys-3329 together coordinate Zn(2+). Positions 3455 to 3507 (DDEHLLIQHYCQSLNQDSPLSQPRSPAQILISLESEERGELERILADLEEENR) are binds to SNTB1. Phosphoserine is present on residues Ser-3472, Ser-3479, and Ser-3489. Disordered stretches follow at residues 3517–3543 (KQQHEHKGLSPLPSPPEMMPTSPQSPR) and 3590–3674 (QAEA…EDTM). Polar residues-rich tracts occupy residues 3596–3615 (NGTTVSSPSTSLQRSDSSQP) and 3651–3662 (QLNNSFPSSRGR). Phosphoserine occurs at positions 3601, 3602, 3606, 3612, 3613, and 3655.

As to quaternary structure, interacts with SYNM. Interacts with the syntrophins SNTG1 and SNTG2. Interacts with KRT19. Component of the dystrophin-associated glycoprotein complex which is composed of three subcomplexes: a cytoplasmic complex comprised of DMD (or UTRN), DTNA and a number of syntrophins, such as SNTB1, SNTB2, SNTG1 and SNTG2, the transmembrane dystroglycan complex, and the sarcoglycan-sarcospan complex. Interacts with DAG1 (betaDAG1) with DMD; the interaction is inhibited by phosphorylation on the PPXY motif of DAG1. Interacts with SYNM; SNTA1 and SNTB1. Interacts with CMYA5. Directly interacts with ANK2 and ANK3; these interactions do not interfere with betaDAG1-binding and are necessary for proper localization in muscle cells. Identified in a dystroglycan complex that contains at least PRX, DRP2, UTRN, DMD and DAG1. Interacts with DTNB. Interacts with PGM5; the interaction is direct. Interacts with NOS1; localizes NOS1 to sarcolemma in muscle cells. In terms of tissue distribution, in the retina, expressed in the outer plexiform layer (OPL) and around the blood vessels. Also observed at the vitreal border of the retina corresponding to the inner limiting membrane (ILM). Presynaptically localized in cone pedicles and postsynaptically in bipolar cells (at protein level).

It localises to the cell membrane. The protein localises to the sarcolemma. It is found in the cytoplasm. The protein resides in the cytoskeleton. Its subcellular location is the postsynaptic cell membrane. Its function is as follows. Anchors the extracellular matrix to the cytoskeleton via F-actin. Ligand for dystroglycan. Component of the dystrophin-associated glycoprotein complex which accumulates at the neuromuscular junction (NMJ) and at a variety of synapses in the peripheral and central nervous systems and has a structural function in stabilizing the sarcolemma. Also implicated in signaling events and synaptic transmission. The polypeptide is Dystrophin (Sus scrofa (Pig)).